A 282-amino-acid chain; its full sequence is Bifunctional protein FolD (282 aa).

NADP(+) is bound by residues 164–166 and Ser-189; that span reads GRS.

It belongs to the tetrahydrofolate dehydrogenase/cyclohydrolase family. Homodimer.

The catalysed reaction is (6R)-5,10-methylene-5,6,7,8-tetrahydrofolate + NADP(+) = (6R)-5,10-methenyltetrahydrofolate + NADPH. It catalyses the reaction (6R)-5,10-methenyltetrahydrofolate + H2O = (6R)-10-formyltetrahydrofolate + H(+). It functions in the pathway one-carbon metabolism; tetrahydrofolate interconversion. Catalyzes the oxidation of 5,10-methylenetetrahydrofolate to 5,10-methenyltetrahydrofolate and then the hydrolysis of 5,10-methenyltetrahydrofolate to 10-formyltetrahydrofolate. This chain is Bifunctional protein FolD, found in Streptococcus suis (strain 98HAH33).